The following is a 92-amino-acid chain: Small ribosomal subunit protein uS19 (92 aa).

The protein belongs to the universal ribosomal protein uS19 family.

Its function is as follows. Protein S19 forms a complex with S13 that binds strongly to the 16S ribosomal RNA. This chain is Small ribosomal subunit protein uS19 (rpsS), found in Rickettsia prowazekii (strain Madrid E).